The following is a 119-amino-acid chain: Large ribosomal subunit protein uL18 (119 aa).

Belongs to the universal ribosomal protein uL18 family. In terms of assembly, part of the 50S ribosomal subunit; part of the 5S rRNA/L5/L18/L25 subcomplex. Contacts the 5S and 23S rRNAs.

Functionally, this is one of the proteins that bind and probably mediate the attachment of the 5S RNA into the large ribosomal subunit, where it forms part of the central protuberance. This Tropheryma whipplei (strain TW08/27) (Whipple's bacillus) protein is Large ribosomal subunit protein uL18.